The sequence spans 468 residues: ATP synthase subunit beta (468 aa).

155–162 contributes to the ATP binding site; the sequence is GGAGVGKT.

Belongs to the ATPase alpha/beta chains family. As to quaternary structure, F-type ATPases have 2 components, CF(1) - the catalytic core - and CF(0) - the membrane proton channel. CF(1) has five subunits: alpha(3), beta(3), gamma(1), delta(1), epsilon(1). CF(0) has three main subunits: a(1), b(2) and c(9-12). The alpha and beta chains form an alternating ring which encloses part of the gamma chain. CF(1) is attached to CF(0) by a central stalk formed by the gamma and epsilon chains, while a peripheral stalk is formed by the delta and b chains.

It localises to the cell membrane. It catalyses the reaction ATP + H2O + 4 H(+)(in) = ADP + phosphate + 5 H(+)(out). In terms of biological role, produces ATP from ADP in the presence of a proton gradient across the membrane. The catalytic sites are hosted primarily by the beta subunits. The polypeptide is ATP synthase subunit beta (Streptococcus pyogenes serotype M6 (strain ATCC BAA-946 / MGAS10394)).